Here is a 211-residue protein sequence, read N- to C-terminus: Interleukin-6 (211 aa).

An N-terminal signal peptide occupies residues 1 to 25; sequence MNSLSTSTFSPVAFSLGLLLVMATA. Cys-71 and Cys-77 are oxidised to a cystine. The residue at position 80 (Ser-80) is a Phosphoserine. A disulfide bridge connects residues Cys-100 and Cys-110.

Belongs to the IL-6 superfamily. Component of a hexamer of two molecules each of IL6, IL6R and IL6ST; first binds to IL6R to associate with the signaling subunit IL6ST. Interacts with IL6R (via the N-terminal ectodomain); this interaction may be affected by IL6R-binding with SORL1, hence decreasing IL6 cis signaling. Interacts with SORL1 (via the N-terminal ectodomain); this interaction leads to IL6 internalization and lysosomal degradation. May form a trimeric complex with the soluble SORL1 ectodomain and soluble IL6R receptor; this interaction might stabilize circulating IL6, hence promoting IL6 trans signaling.

The protein resides in the secreted. Cytokine with a wide variety of biological functions in immunity, tissue regeneration, and metabolism. Binds to IL6R, then the complex associates to the signaling subunit IL6ST/gp130 to trigger the intracellular IL6-signaling pathway. The interaction with the membrane-bound IL6R and IL6ST stimulates 'classic signaling', whereas the binding of IL6 and soluble IL6R to IL6ST stimulates 'trans-signaling'. Alternatively, 'cluster signaling' occurs when membrane-bound IL6:IL6R complexes on transmitter cells activate IL6ST receptors on neighboring receiver cells. Functionally, IL6 is a potent inducer of the acute phase response. Rapid production of IL6 contributes to host defense during infection and tissue injury, but excessive IL6 synthesis is involved in disease pathology. In the innate immune response, is synthesized by myeloid cells, such as macrophages and dendritic cells, upon recognition of pathogens through toll-like receptors (TLRs) at the site of infection or tissue injury. In the adaptive immune response, is required for the differentiation of B cells into immunoglobulin-secreting cells. Plays a major role in the differentiation of CD4(+) T cell subsets. Essential factor for the development of T follicular helper (Tfh) cells that are required for the induction of germinal-center formation. Required to drive naive CD4(+) T cells to the Th17 lineage. Also required for proliferation of myeloma cells and the survival of plasmablast cells. In terms of biological role, acts as an essential factor in bone homeostasis and on vessels directly or indirectly by induction of VEGF, resulting in increased angiogenesis activity and vascular permeability. Induces, through 'trans-signaling' and synergistically with IL1B and TNF, the production of VEGF. Involved in metabolic controls, is discharged into the bloodstream after muscle contraction increasing lipolysis and improving insulin resistance. 'Trans-signaling' in central nervous system also regulates energy and glucose homeostasis. Mediates, through GLP-1, crosstalk between insulin-sensitive tissues, intestinal L cells and pancreatic islets to adapt to changes in insulin demand. Also acts as a myokine. Plays a protective role during liver injury, being required for maintenance of tissue regeneration. Also has a pivotal role in iron metabolism by regulating HAMP/hepcidin expression upon inflammation or bacterial infection. Through activation of IL6ST-YAP-NOTCH pathway, induces inflammation-induced epithelial regeneration. This Lama glama (Llama) protein is Interleukin-6 (IL6).